Consider the following 367-residue polypeptide: Phosphoribosylaminoimidazole-succinocarboxamide synthase (367 aa).

The protein belongs to the SAICAR synthetase family.

It catalyses the reaction 5-amino-1-(5-phospho-D-ribosyl)imidazole-4-carboxylate + L-aspartate + ATP = (2S)-2-[5-amino-1-(5-phospho-beta-D-ribosyl)imidazole-4-carboxamido]succinate + ADP + phosphate + 2 H(+). It functions in the pathway purine metabolism; IMP biosynthesis via de novo pathway; 5-amino-1-(5-phospho-D-ribosyl)imidazole-4-carboxamide from 5-amino-1-(5-phospho-D-ribosyl)imidazole-4-carboxylate: step 1/2. The chain is Phosphoribosylaminoimidazole-succinocarboxamide synthase from Shewanella sp. (strain ANA-3).